Here is a 426-residue protein sequence, read N- to C-terminus: Histone deacetylase 9 (426 aa).

The histone deacetylase stretch occupies residues 6–318 (KISYFYDGDV…WTVETGILLD (313 aa)). The active-site Proton donor/acceptor is the histidine 137. Aspartate 172, histidine 174, and aspartate 261 together coordinate Zn(2+). Residues 383–426 (PDFYIPDFDEDEQNPDVRADQRSRDKQIQRDDEYFDGDNDNDAS) are disordered. Residues 397–414 (PDVRADQRSRDKQIQRDD) show a composition bias toward basic and acidic residues. A compositionally biased stretch (acidic residues) spans 415-426 (EYFDGDNDNDAS).

This sequence belongs to the histone deacetylase family. HD type 1 subfamily. As to quaternary structure, interacts with AHL22. Binds to farnesylated ASG2 in the cytosol. Requires Zn(2+) as cofactor.

The protein localises to the nucleus. It localises to the cytoplasm. It is found in the cytosol. The catalysed reaction is N(6)-acetyl-L-lysyl-[histone] + H2O = L-lysyl-[histone] + acetate. In terms of biological role, responsible for the deacetylation of lysine residues on the N-terminal part of the core histones (H2A, H2B, H3 and H4). Histone deacetylation gives a tag for epigenetic repression and plays an important role in transcriptional regulation, cell cycle progression and developmental events. Histone deacetylases act via the formation of large multiprotein complexes. The sequence is that of Histone deacetylase 9 (HDA9) from Arabidopsis thaliana (Mouse-ear cress).